The primary structure comprises 1007 residues: Bifunctional glutamine synthetase adenylyltransferase/adenylyl-removing enzyme (1007 aa).

An adenylyl removase region spans residues 1–496 (MTREQLSLTV…LHERLFYRPL (496 aa)). An adenylyl transferase region spans residues 505–1007 (NEDARLSGEA…GPPQRPATTA (503 aa)).

Belongs to the GlnE family. The cofactor is Mg(2+).

The catalysed reaction is [glutamine synthetase]-O(4)-(5'-adenylyl)-L-tyrosine + phosphate = [glutamine synthetase]-L-tyrosine + ADP. It catalyses the reaction [glutamine synthetase]-L-tyrosine + ATP = [glutamine synthetase]-O(4)-(5'-adenylyl)-L-tyrosine + diphosphate. Its function is as follows. Involved in the regulation of glutamine synthetase GlnA, a key enzyme in the process to assimilate ammonia. When cellular nitrogen levels are high, the C-terminal adenylyl transferase (AT) inactivates GlnA by covalent transfer of an adenylyl group from ATP to specific tyrosine residue of GlnA, thus reducing its activity. Conversely, when nitrogen levels are low, the N-terminal adenylyl removase (AR) activates GlnA by removing the adenylyl group by phosphorolysis, increasing its activity. The regulatory region of GlnE binds the signal transduction protein PII (GlnB) which indicates the nitrogen status of the cell. The sequence is that of Bifunctional glutamine synthetase adenylyltransferase/adenylyl-removing enzyme from Leifsonia xyli subsp. xyli (strain CTCB07).